A 126-amino-acid chain; its full sequence is Thioredoxin-like 3-3 (126 aa).

A disordered region spans residues 1–24; the sequence is MRKQESEGANLEFESKSNDNGNVK. One can recognise a Thioredoxin domain in the interval 5 to 126; sequence ESEGANLEFE…RLHDRLWLHS (122 aa). Catalysis depends on nucleophile residues Cys-55 and Cys-58. Cys-55 and Cys-58 are oxidised to a cystine.

This sequence belongs to the thioredoxin family.

In terms of biological role, probable thiol-disulfide oxidoreductase that may participate in various redox reactions. The sequence is that of Thioredoxin-like 3-3 from Arabidopsis thaliana (Mouse-ear cress).